Here is a 548-residue protein sequence, read N- to C-terminus: ATP synthase subunit alpha (548 aa).

Residue 172–179 participates in ATP binding; that stretch reads GDRKTGKT. Residues 511–548 are disordered; sequence FETTSGESVVPDENVEAMSEDDVEKESVKVRKPAPKKK. Residues 523–534 show a composition bias toward acidic residues; that stretch reads ENVEAMSEDDVE.

It belongs to the ATPase alpha/beta chains family. F-type ATPases have 2 components, CF(1) - the catalytic core - and CF(0) - the membrane proton channel. CF(1) has five subunits: alpha(3), beta(3), gamma(1), delta(1), epsilon(1). CF(0) has three main subunits: a(1), b(2) and c(9-12). The alpha and beta chains form an alternating ring which encloses part of the gamma chain. CF(1) is attached to CF(0) by a central stalk formed by the gamma and epsilon chains, while a peripheral stalk is formed by the delta and b chains.

It localises to the cell membrane. It carries out the reaction ATP + H2O + 4 H(+)(in) = ADP + phosphate + 5 H(+)(out). In terms of biological role, produces ATP from ADP in the presence of a proton gradient across the membrane. The alpha chain is a regulatory subunit. This Mycobacterium sp. (strain JLS) protein is ATP synthase subunit alpha.